The sequence spans 605 residues: Replication and transcription activator (605 aa).

2 disordered regions span residues 307–381 and 447–509; these read SLPS…EPEQ and RIRP…EDPD. Over residues 321–338 the composition is skewed to low complexity; it reads SADCGDSSSSSSDSGNSD. A compositionally biased stretch (basic and acidic residues) spans 341–353; that stretch reads QSEREEARAEAPR. Residues 355 to 364 are compositionally biased toward basic residues; sequence RAPKSRRTSR.

This sequence belongs to the herpesviridae Rta family. Interacts with human ATF7IP protein, leading to promote and regulate host genes in virus-infected cells. Interacts with RNA polymerase III complex; this interaction downregulates small RNA transcription and 5'-pppRNA production.

It is found in the host nucleus. The protein resides in the virion tegument. Functionally, immediate-early transcription factor that controls the initiation of viral lytic gene expression and lytic reactivation from latency. Triggers lytic replication, and initiates a cellular senescence program in epithelial cells. Up-regulates human DCR3/TNFRSF6B by directly binding to its receptor. Globally induces a proteasome-dependent loss of SUMOylated proteins in the host cell and the loss of promeylocytic leukemia nuclear bodies. Improves the stability of the triplex capsid protein TRX1 by reducing the ubiquitination level of the latter. Mediates evasion of inflammasome activation and antiviral responses (T- and NK cell activation) during EBV early lytic infection. This is Replication and transcription activator from Epstein-Barr virus (strain AG876) (HHV-4).